Reading from the N-terminus, the 256-residue chain is Triosephosphate isomerase (256 aa).

A substrate-binding site is contributed by 12 to 14; it reads NWK. His99 acts as the Electrophile in catalysis. Glu169 serves as the catalytic Proton acceptor. Residues Gly175, Ser214, and 235–236 each bind substrate; that span reads GG.

This sequence belongs to the triosephosphate isomerase family. As to quaternary structure, homodimer.

The protein localises to the cytoplasm. The catalysed reaction is D-glyceraldehyde 3-phosphate = dihydroxyacetone phosphate. Its pathway is carbohydrate biosynthesis; gluconeogenesis. It functions in the pathway carbohydrate degradation; glycolysis; D-glyceraldehyde 3-phosphate from glycerone phosphate: step 1/1. Its function is as follows. Involved in the gluconeogenesis. Catalyzes stereospecifically the conversion of dihydroxyacetone phosphate (DHAP) to D-glyceraldehyde-3-phosphate (G3P). The sequence is that of Triosephosphate isomerase from Rhizobium meliloti (strain 1021) (Ensifer meliloti).